Here is a 538-residue protein sequence, read N- to C-terminus: Phosphoenolpyruvate carboxykinase (ATP) (538 aa).

Substrate is bound by residues R64, Y205, and K211. ATP is bound by residues K211, H230, and G246–T254. Mn(2+)-binding residues include K211 and H230. D267 is a Mn(2+) binding site. ATP is bound by residues E295, R331, R447–I448, and T453. Substrate is bound at residue R331.

Belongs to the phosphoenolpyruvate carboxykinase (ATP) family. In terms of assembly, monomer. Mn(2+) serves as cofactor.

It is found in the cytoplasm. The catalysed reaction is oxaloacetate + ATP = phosphoenolpyruvate + ADP + CO2. Its pathway is carbohydrate biosynthesis; gluconeogenesis. Its function is as follows. Involved in the gluconeogenesis. Catalyzes the conversion of oxaloacetate (OAA) to phosphoenolpyruvate (PEP) through direct phosphoryl transfer between the nucleoside triphosphate and OAA. This Haemophilus influenzae (strain PittGG) protein is Phosphoenolpyruvate carboxykinase (ATP).